The following is a 276-amino-acid chain: MMKPVLHFSKLYEVKKLLRKSRLYTVCEESRCPNISECFGNKTATFMILGNRCTRRCAFCNVEKGFPKGVDPEEPYRLLEAVKTLGLKYVVITSVTRDDLPDGGASHFAKCIRVLKENIEDIKVEVLIPDFRGNKKALEVVLKEKPVVLNHNVETVPRLYPSVRIGANYKRSLNILKWSKEIDKSVYTKSALILGFGERKEEVIKVMEDLRSVDCDFLVLGQYYQPSLKHHPVVKYYSEEEFKEFEEIGYEMGFKFVVSKPNARSSYKAFESLLST.

7 residues coordinate [4Fe-4S] cluster: cysteine 27, cysteine 32, cysteine 38, cysteine 53, cysteine 57, cysteine 60, and serine 266. Positions 39 to 255 (FGNKTATFMI…EEIGYEMGFK (217 aa)) constitute a Radical SAM core domain.

Belongs to the radical SAM superfamily. Lipoyl synthase family. The cofactor is [4Fe-4S] cluster.

The protein resides in the cytoplasm. It carries out the reaction [[Fe-S] cluster scaffold protein carrying a second [4Fe-4S](2+) cluster] + N(6)-octanoyl-L-lysyl-[protein] + 2 oxidized [2Fe-2S]-[ferredoxin] + 2 S-adenosyl-L-methionine + 4 H(+) = [[Fe-S] cluster scaffold protein] + N(6)-[(R)-dihydrolipoyl]-L-lysyl-[protein] + 4 Fe(3+) + 2 hydrogen sulfide + 2 5'-deoxyadenosine + 2 L-methionine + 2 reduced [2Fe-2S]-[ferredoxin]. It functions in the pathway protein modification; protein lipoylation via endogenous pathway; protein N(6)-(lipoyl)lysine from octanoyl-[acyl-carrier-protein]: step 2/2. In terms of biological role, catalyzes the radical-mediated insertion of two sulfur atoms into the C-6 and C-8 positions of the octanoyl moiety bound to the lipoyl domains of lipoate-dependent enzymes, thereby converting the octanoylated domains into lipoylated derivatives. The sequence is that of Lipoyl synthase from Aquifex aeolicus (strain VF5).